The chain runs to 137 residues: Protein Turandot X (137 aa).

The first 24 residues, 1-24 (MKVPVFQLSCLLCLIVCLLCSVKA), serve as a signal peptide directing secretion.

Belongs to the Turandot family.

It localises to the secreted. Functionally, a humoral factor that may play a role in stress tolerance. In Drosophila persimilis (Fruit fly), this protein is Protein Turandot X.